The following is a 147-amino-acid chain: Ribonuclease 4 (147 aa).

The signal sequence occupies residues 1 to 28 (MDIQRTQSLLLLLLLTLLGLGLVQPSYG). Gln29 is modified (pyrrolidone carboxylic acid). DUMP is bound by residues Arg35, His40, Lys68, Asn71, and Thr72. His40 acts as the Proton acceptor in catalysis. Intrachain disulfides connect Cys53–Cys109, Cys67–Cys120, Cys85–Cys135, and Cys92–Cys99. Catalysis depends on His144, which acts as the Proton donor. Phe145 provides a ligand contact to dUMP.

The protein belongs to the pancreatic ribonuclease family.

It is found in the secreted. In terms of biological role, cleaves preferentially after uridine bases. Has antimicrobial activity against uropathogenic E.coli (UPEC). Probably contributes to urinary tract sterility. The protein is Ribonuclease 4 (Rnase4) of Rattus norvegicus (Rat).